A 385-amino-acid polypeptide reads, in one-letter code: Chaperone protein DnaJ (385 aa).

In terms of domain architecture, J spans 5-70 (DYYEVLGVSK…DKKAAYDRFG (66 aa)). Residues 143 to 221 (GLSKQITVPS…CGGAGRQEKD (79 aa)) form a CR-type zinc finger. Zn(2+) contacts are provided by Cys156, Cys159, Cys173, Cys176, Cys195, Cys198, Cys209, and Cys212. 4 CXXCXGXG motif repeats span residues 156-163 (CSSCDGTG), 173-180 (CPTCSGMG), 195-202 (CPTCNGMG), and 209-216 (CRTCGGAG). The disordered stretch occupies residues 299–323 (GGRSRVRVPEGSQSGRQMRLRGKGM).

The protein belongs to the DnaJ family. Homodimer. It depends on Zn(2+) as a cofactor.

It localises to the cytoplasm. Its function is as follows. Participates actively in the response to hyperosmotic and heat shock by preventing the aggregation of stress-denatured proteins and by disaggregating proteins, also in an autonomous, DnaK-independent fashion. Unfolded proteins bind initially to DnaJ; upon interaction with the DnaJ-bound protein, DnaK hydrolyzes its bound ATP, resulting in the formation of a stable complex. GrpE releases ADP from DnaK; ATP binding to DnaK triggers the release of the substrate protein, thus completing the reaction cycle. Several rounds of ATP-dependent interactions between DnaJ, DnaK and GrpE are required for fully efficient folding. Also involved, together with DnaK and GrpE, in the DNA replication of plasmids through activation of initiation proteins. The chain is Chaperone protein DnaJ from Jannaschia sp. (strain CCS1).